The following is a 94-amino-acid chain: Co-chaperonin GroES (94 aa).

Belongs to the GroES chaperonin family. Heptamer of 7 subunits arranged in a ring. Interacts with the chaperonin GroEL.

The protein localises to the cytoplasm. Its function is as follows. Together with the chaperonin GroEL, plays an essential role in assisting protein folding. The GroEL-GroES system forms a nano-cage that allows encapsulation of the non-native substrate proteins and provides a physical environment optimized to promote and accelerate protein folding. GroES binds to the apical surface of the GroEL ring, thereby capping the opening of the GroEL channel. This chain is Co-chaperonin GroES, found in Enterococcus faecalis (strain ATCC 700802 / V583).